The chain runs to 364 residues: Chorismate synthase (364 aa).

NADP(+) contacts are provided by Arg48 and Arg54. FMN-binding positions include Arg129 to Ser131, Asn243 to Ala244, Gly288, Lys303 to Ser307, and Arg329.

Belongs to the chorismate synthase family. Homotetramer. It depends on FMNH2 as a cofactor.

The enzyme catalyses 5-O-(1-carboxyvinyl)-3-phosphoshikimate = chorismate + phosphate. Its pathway is metabolic intermediate biosynthesis; chorismate biosynthesis; chorismate from D-erythrose 4-phosphate and phosphoenolpyruvate: step 7/7. Catalyzes the anti-1,4-elimination of the C-3 phosphate and the C-6 proR hydrogen from 5-enolpyruvylshikimate-3-phosphate (EPSP) to yield chorismate, which is the branch point compound that serves as the starting substrate for the three terminal pathways of aromatic amino acid biosynthesis. This reaction introduces a second double bond into the aromatic ring system. The polypeptide is Chorismate synthase (Chelativorans sp. (strain BNC1)).